The primary structure comprises 823 residues: Sphingomyelin phosphodiesterase 4 (823 aa).

Phosphoserine is present on residues S130 and S245. T665 carries the phosphothreonine modification. Residue S749 is modified to Phosphoserine. A helical transmembrane segment spans residues 776–796 (LLLLLMAFFVASLFCIGPLSC).

It depends on Mg(2+) as a cofactor. As to expression, expressed in skeletal muscle (at protein level). In terms of tissue distribution, expressed in skeletal muscle but a lower levels than isoform 1 (at protein level).

Its subcellular location is the endoplasmic reticulum membrane. The protein resides in the golgi apparatus membrane. The protein localises to the nucleus envelope. It is found in the cell membrane. It localises to the sarcolemma. The catalysed reaction is a sphingomyelin + H2O = phosphocholine + an N-acylsphing-4-enine + H(+). Its activity is regulated as follows. Activated by phosphatidylserine and tumor necrosis factor (TNF). Inhibited by scyphostatin. In terms of biological role, catalyzes the hydrolysis of membrane sphingomyelin to form phosphorylcholine and ceramide. It has a relevant role in the homeostasis of membrane sphingolipids, thereby influencing membrane integrity, and endoplasmic reticulum organization and function. May sensitize cells to DNA damage-induced apoptosis. In skeletal muscle, mediates TNF-stimulated oxidant production. The protein is Sphingomyelin phosphodiesterase 4 (Smpd4) of Mus musculus (Mouse).